Here is a 65-residue protein sequence, read N- to C-terminus: Hirudin-2' (65 aa).

Positions 1-3 are interaction with thrombin active site; that stretch reads ITY. Cystine bridges form between Cys6-Cys14, Cys16-Cys28, and Cys22-Cys39. The segment at 39–65 is disordered; the sequence is CVTGEGTPKPQSHNDGDFEEIPEEYLQ. Thr45 is a glycosylation site (O-linked (GalNAc...) threonine). Residues 55 to 65 are interaction with fibrinogen-binding exosite of thrombin; sequence DFEEIPEEYLQ. Over residues 55 to 65 the composition is skewed to acidic residues; the sequence is DFEEIPEEYLQ. Tyr63 carries the post-translational modification Sulfotyrosine.

This sequence belongs to the protease inhibitor I14 (hirudin) family.

It is found in the secreted. Hirudin is a potent thrombin-specific protease inhibitor. It forms a stable non-covalent complex with alpha-thrombin, thereby abolishing its ability to cleave fibrinogen. This chain is Hirudin-2', found in Hirudo medicinalis (Medicinal leech).